A 315-amino-acid chain; its full sequence is DNA-directed RNA polymerase subunit alpha (315 aa).

The interval 1 to 228 (MLEIEKPKIE…EHLRLFVGLT (228 aa)) is alpha N-terminal domain (alpha-NTD). An alpha C-terminal domain (alpha-CTD) region spans residues 245-315 (KNKLLEMPIE…LGLDLRHDEE (71 aa)).

This sequence belongs to the RNA polymerase alpha chain family. Homodimer. The RNAP catalytic core consists of 2 alpha, 1 beta, 1 beta' and 1 omega subunit. When a sigma factor is associated with the core the holoenzyme is formed, which can initiate transcription.

It carries out the reaction RNA(n) + a ribonucleoside 5'-triphosphate = RNA(n+1) + diphosphate. DNA-dependent RNA polymerase catalyzes the transcription of DNA into RNA using the four ribonucleoside triphosphates as substrates. This Desulforudis audaxviator (strain MP104C) protein is DNA-directed RNA polymerase subunit alpha.